The primary structure comprises 317 residues: Neuroguidin-A (317 aa).

Disordered stretches follow at residues 125–170 and 280–317; these read ENDP…SKVK and SALT…RRRH. Over residues 146 to 157 the composition is skewed to acidic residues; it reads DERESDSGEEGA. The segment covering 297 to 317 has biased composition (basic residues); it reads KKSKKGPKKSKKKKGFSRRRH.

The protein belongs to the SAS10 family. Part of the small subunit (SSU) processome, composed of more than 70 proteins and the RNA chaperone small nucleolar RNA (snoRNA) U3.

It is found in the nucleus. The protein resides in the nucleolus. Its subcellular location is the chromosome. The protein localises to the centromere. It localises to the cytoplasm. It is found in the cell projection. The protein resides in the axon. Its subcellular location is the dendrite. The protein localises to the filopodium. Part of the small subunit (SSU) processome, first precursor of the small eukaryotic ribosomal subunit. During the assembly of the SSU processome in the nucleolus, many ribosome biogenesis factors, an RNA chaperone and ribosomal proteins associate with the nascent pre-rRNA and work in concert to generate RNA folding, modifications, rearrangements and cleavage as well as targeted degradation of pre-ribosomal RNA by the RNA exosome. Its dissociation from the complex determines the transition from state pre-A1 to state pre-A1*. May inhibit mRNA translation. The protein is Neuroguidin-A (ngdn-a) of Xenopus laevis (African clawed frog).